We begin with the raw amino-acid sequence, 298 residues long: Zinc finger protein-like 1 homolog (298 aa).

The B box-type; degenerate zinc finger occupies 1-43 (MGLCKCPKRLVTNQFCFEHRVNVCEHCMVQSHPKCIVQSYLQW). The RING-type; atypical zinc-finger motif lies at 53 to 101 (CTLCGTTLEQGDCVRLVCYHVFHWDCLNARQAALPANTAPRGHQCPACT). The disordered stretch occupies residues 199–230 (AGDYASSRRPLLPRQSPIGGTDRDDNKYQRRT). Serine 214 is subject to Phosphoserine. Residues 255 to 275 (WFLVTAGILAFVLFVYLMAWL) traverse the membrane as a helical segment.

Belongs to the ZFPL1 family.

The protein resides in the membrane. The sequence is that of Zinc finger protein-like 1 homolog from Drosophila erecta (Fruit fly).